Consider the following 400-residue polypeptide: Large envelope protein (400 aa).

M1 is modified (N-acetylmethionine). Disordered stretches follow at residues 1–20 and 85–114; these read MGGWSSKPRKGMGTNLSVPN and LTPVSTIPPPASANRQSGRQPTPISPPLRD. The N-myristoyl glycine; by host moiety is linked to residue G2. The tract at residues 2–119 is pre-S1; sequence GGWSSKPRKG…PPLRDSHPQA (118 aa). Residues 2-174 form a pre-S region; that stretch reads GGWSSKPRKG…SARTGDPVTN (173 aa). Topologically, residues 2-181 are virion surface; in external conformation; sequence GGWSSKPRKG…VTNMENITSG (180 aa). Residues 2-253 lie on the Intravirion; in internal conformation side of the membrane; the sequence is GGWSSKPRKG…PGYRWMCLRR (252 aa). A glycan (N-linked (GlcNAc...) asparagine) is linked at W4. Polar residues predominate over residues 97-106; that stretch reads ANRQSGRQPT. Positions 120–174 are pre-S2; that stretch reads MQWNSTAFHQALQDPRVRGLYFPAGGSSSGTVNPAPNIASHISSISARTGDPVTN. Residues 182-202 form a helical membrane-spanning segment; that stretch reads FLGPLPVLQAGFFLLTRILTI. The Intravirion; in external conformation portion of the chain corresponds to 203–253; it reads PQSLDSWWTSLNFLGGSPVCLGQNSRSPTSNHSPTSCPPICPGYRWMCLRR. A helical transmembrane segment spans residues 254–274; it reads FIIFLFILLLCLIFLLVLLDY. Over 275–348 the chain is Virion surface; that stretch reads QGMLPVCPLI…WASVRFSWLS (74 aa). N320 is a glycosylation site (N-linked (GlcNAc...) asparagine; by host). The chain crosses the membrane as a helical span at residues 349–369; the sequence is LLVPFVQWFVGLSPTVWLSAI. Residues 370-375 lie on the Intravirion side of the membrane; that stretch reads WMMWYW. The chain crosses the membrane as a helical span at residues 376–398; it reads GPSLYSIVSSFIPLLPIFFCLWV. Topologically, residues 399-400 are virion surface; it reads YI.

The protein belongs to the orthohepadnavirus major surface antigen family. As to quaternary structure, in its internal form (Li-HBsAg), interacts with the capsid protein and with the isoform S. Interacts with host chaperone CANX. Associates with host chaperone CANX through its pre-S2 N glycan; this association may be essential for isoform M proper secretion. In terms of assembly, interacts with isoform L. Interacts with the antigens of satellite virus HDV (HDVAgs); this interaction is required for encapsidation of HDV genomic RNA. Isoform M is N-terminally acetylated by host at a ratio of 90%, and N-glycosylated by host at the pre-S2 region. In terms of processing, myristoylated.

It is found in the virion membrane. In terms of biological role, the large envelope protein exists in two topological conformations, one which is termed 'external' or Le-HBsAg and the other 'internal' or Li-HBsAg. In its external conformation the protein attaches the virus to cell receptors and thereby initiating infection. This interaction determines the species specificity and liver tropism. This attachment induces virion internalization predominantly through caveolin-mediated endocytosis. The large envelope protein also assures fusion between virion membrane and endosomal membrane. In its internal conformation the protein plays a role in virion morphogenesis and mediates the contact with the nucleocapsid like a matrix protein. The middle envelope protein plays an important role in the budding of the virion. It is involved in the induction of budding in a nucleocapsid independent way. In this process the majority of envelope proteins bud to form subviral lipoprotein particles of 22 nm of diameter that do not contain a nucleocapsid. The polypeptide is Large envelope protein (Homo sapiens (Human)).